The following is a 784-amino-acid chain: uncharacterized protein (784 aa).

Positions 422–619 (IRIVQNEQDL…EVFQKIVEVV (198 aa)) constitute a 3'-5' exonuclease domain.

This is an uncharacterized protein from Caenorhabditis elegans.